The chain runs to 49 residues: Putative DNA-directed RNA polymerase subunit omega (49 aa).

Belongs to the RNA polymerase subunit omega family.

It is found in the plastid. Its subcellular location is the chloroplast. The enzyme catalyses RNA(n) + a ribonucleoside 5'-triphosphate = RNA(n+1) + diphosphate. In terms of biological role, may be involved in RNA polymerase activity. The protein is Putative DNA-directed RNA polymerase subunit omega (rpoZ) of Cyanidioschyzon merolae (strain NIES-3377 / 10D) (Unicellular red alga).